We begin with the raw amino-acid sequence, 356 residues long: 7,8-didemethyl-8-hydroxy-5-deazariboflavin synthase (356 aa).

Residues 40-280 enclose the Radical SAM core domain; the sequence is ITYSKNVFIP…KDISIQVPPN (241 aa). Residues Cys54, Cys58, and Cys61 each contribute to the [4Fe-4S] cluster site.

It belongs to the radical SAM superfamily. CofG family. Consists of two subunits, CofG and CofH. Requires [4Fe-4S] cluster as cofactor.

It catalyses the reaction 5-amino-5-(4-hydroxybenzyl)-6-(D-ribitylimino)-5,6-dihydrouracil + S-adenosyl-L-methionine = 7,8-didemethyl-8-hydroxy-5-deazariboflavin + 5'-deoxyadenosine + L-methionine + NH4(+) + H(+). The protein operates within cofactor biosynthesis; coenzyme F0 biosynthesis. Catalyzes the radical-mediated synthesis of 7,8-didemethyl-8-hydroxy-5-deazariboflavin from 5-amino-5-(4-hydroxybenzyl)-6-(D-ribitylimino)-5,6-dihydrouracil. In Methanococcus aeolicus (strain ATCC BAA-1280 / DSM 17508 / OCM 812 / Nankai-3), this protein is 7,8-didemethyl-8-hydroxy-5-deazariboflavin synthase.